The sequence spans 150 residues: UPF0178 protein Bcep1808_1605 (150 aa).

The protein belongs to the UPF0178 family.

This Burkholderia vietnamiensis (strain G4 / LMG 22486) (Burkholderia cepacia (strain R1808)) protein is UPF0178 protein Bcep1808_1605.